The sequence spans 2284 residues: MWQVPEGSQCCCTGKSFSNAEAKELRYVCSCWMSTRLVKAEAPPQQSRKSGIAPTPLKSKGTIQVSLPKATGVKPSIHKSKGASVAPAPLLKQRCEVVVQYGPPADIELVYPPLVREEEKSSNIVVLPPTQKVEVRVPVCCAPKWMVAIPKPPVKLAPKASKLRFPKGAVAYNGVNFIDTKGKVVLSEGAKRILRGIRVAAKQRLRAARRSAACKKVRAKRALAEFEAIVQSERLDQLKTGFQVVLPAPKMSCSLKEAAPSTTSVVVVKKRKLPRLPKILPEQDFSCLEGFDWGEKSHPVEVDIEDDWILVEKPVLKRQAVQTAQGRATEALTRFAATSGFSLGAHQKVEDFASSGEAEYLMAGEFADLCLLSLVYNDAPTLSATIEELRDSKDFLEAIELLKLELAEIPTDSTTCAPFKQWASAAKQMAKGVGTMVGDFTRAAGAAVVISFDMAVEFLQDKALKFCKRIFDVTMAPYLQHLASAHSILKKIWEKLSEWMESLKSKASLALEVMRQHAIFALGAMVIGGVVVLVEKVLIAAKIIPNCGIILGAFLTLFFASLGLTALECTAEEIFRMHACCKSAIYSMYSVAEPTMADEGESHTMGATQGLDNAIQALTRVGQSMISFKLGSFSYYAKIAQGFDQLARGKRAIGELTSWLIDLVGSIYSQVSGQESTFFDELSTIVCLDVRAWLLKSKRVRLQVETMAIGDRITLDTIAKLLEEGHKILVTAAGVPRKTSADFTMCIKEEVSKLEEVHARTACAGINEGMRAFPFWVYIFGASQSGKTTIANSIIIPALLEEMNLPKSSVYSRPKTGGFWSGYARQACVKVDDFYAIEQTPSLASSMIDVVNSEPYPLDMAYIHEKGMSMDSPLVVTTANTAVPPTNSQVVDLPSFYNRRAAVLEVRRKDGSFFTPRAYDSCIEVRFMHNKCPYVDSAGVPQGPAVNTPMDEGWITPSEAVAVLKNLLGEHILAEEAKLLEYRERIGNDHPIYNAAKEFIGNMHYPGQWLTAEQKSTYGIKDDGFSFLAVDGKIYKYNVLGKLNPCESEPPHPNVIPWLEKKTLEIVHWDVHKHIATGPRNALVACFLQGLVQGQSKVESVERMGKDSSPEQQNFFKRLSLSERIYLRLCQIRIDNIQKEELAGSGRGPMAILRECLMKSKQVVVENYSLLLTLVAILLLISAAYTLLSTVVALAGCSSFAGGMVAVTAVNNASIPCSEPRLEERYSPRNRFVSRISKIRGEGPSKGQGEHEELVTELYYYCDGVKKLISTCWFKGRSLLMTRHQALAVPIGNEIEVIYADGTTKKLVWPGRQEDGNCKGFVEFPENELVVFEHPHLLTLPIKYEKYFVDDADRQISPNVAVKCCVARLEDGIPQFHFWSKYATARSEVHTLKDEGGGNVYQNKIRRYIVYAHEAKKYDCGALAVAVIQGIPKVIAMLVSGNRGVTYSSVIPNYSSSFIRGEVPYVPEDGLVSRGYRKVGYLHASDAPHVPSKTSFMKVPDELCFPYPDPKQPAILSAEDERLKGTIHEGYTPLRDGMKKFAEPMYLLEEKLLDEVAGDMVQTWYDPGEFLEDISLDQAINGDMDEEYFDPLVMDTSEGYPDVLDRKPGEKGKARFFVGEPGNRAFVAGCNPEKAYYQLEEDSKTKIPSLVSIETPKDERLKRSKIDTPGTRLFSVLPLAYNLLLRVKFLSFSRLLMKKRGHLPCQVGINPYSREWTDLYHRLGELSDVGYNCDYKAFDGLITEQILSTIADMINAGYRDPVGNRQRKNLLLAICGRLSICGNQVYATEAGIPSGCALTVVLNSIFKELLMRYCFKKIVPPVYKECFDRCVVLITYGDDNVFTVAQSVMQYFTGDALKMQMAKLGVTITDGKDKSLSTIPARPLLELEFLKRGFVRSSGGMINAPLEKLSIMSSLVYIRSDGSDMLQKLLDNVNTALVELYLHGDRTYFESVRAFYFEKLPPGAYKELTTWFQAESFHECQKSGESGYKPQGLIEISHGAAFASFTQQAGTELEKHDICPGLSIAGTKYIATENEIVLSLSSVLPGDRNVFKLDLPCGDGIGRLPSKCSILNLRKPGLVMRLCKRAQDEKKTLVIRDERPYIGAWAVACICGESFGFGQQSVLALYANLLGPNQRNGLASYFSDFESPIHIKKVHAKTNSYEGGEALKEIFTFCETIFYEATEMDTRKVMLQNQPDVYPSISLVGGVCFPNEGGEPGAMYSETDVTMAREVQGVYVSEACVKCCRRCVGVATRVVTDTQLFGNNLLKTHLKALRKIQNHTCLRK.

At C569–L1171 the chain is on the cytoplasmic side. An SF3 helicase domain is found at V751–Y919. G781 to T788 contacts ATP. Residues L1172–V1192 traverse the membrane as a helical segment. Topologically, residues A1193–C1217 are lumenal. O-(5'-phospho-RNA)-serine is present on S1218. The Peptidase C3 domain occupies G1243 to F1458. Residues H1284, E1328, and C1420 each act as for picornain 3C-like protease activity in the active site. The region spanning D1728–F1852 is the RdRp catalytic domain.

Specific enzymatic cleavages by picornain 3C-like protease in vivo yield mature proteins. Picornain 3C-like protease is autocatalytically processed. In terms of processing, VPg is uridylylated by the polymerase and is covalently linked to the 5'-end of genomic RNA. This uridylylated form acts as a nucleotide-peptide primer for the polymerase.

It is found in the host endoplasmic reticulum lumen. The protein resides in the host endoplasmic reticulum membrane. It carries out the reaction RNA(n) + a ribonucleoside 5'-triphosphate = RNA(n+1) + diphosphate. Picornain 3C-like protease is a thiol protease that cleaves the P1 and P2 polyproteins. The polypeptide is RNA1 polyprotein (Vitis rupestris (Grape)).